The sequence spans 392 residues: Anhydro-N-acetylmuramic acid kinase (392 aa).

19 to 26 (GTSVDGID) serves as a coordination point for ATP.

It belongs to the anhydro-N-acetylmuramic acid kinase family.

The enzyme catalyses 1,6-anhydro-N-acetyl-beta-muramate + ATP + H2O = N-acetyl-D-muramate 6-phosphate + ADP + H(+). Its pathway is amino-sugar metabolism; 1,6-anhydro-N-acetylmuramate degradation. It participates in cell wall biogenesis; peptidoglycan recycling. Functionally, catalyzes the specific phosphorylation of 1,6-anhydro-N-acetylmuramic acid (anhMurNAc) with the simultaneous cleavage of the 1,6-anhydro ring, generating MurNAc-6-P. Is required for the utilization of anhMurNAc either imported from the medium or derived from its own cell wall murein, and thus plays a role in cell wall recycling. This chain is Anhydro-N-acetylmuramic acid kinase, found in Trichormus variabilis (strain ATCC 29413 / PCC 7937) (Anabaena variabilis).